Consider the following 617-residue polypeptide: Proline--tRNA ligase (617 aa).

This sequence belongs to the class-II aminoacyl-tRNA synthetase family. ProS type 1 subfamily. Homodimer.

Its subcellular location is the cytoplasm. It catalyses the reaction tRNA(Pro) + L-proline + ATP = L-prolyl-tRNA(Pro) + AMP + diphosphate. Functionally, catalyzes the attachment of proline to tRNA(Pro) in a two-step reaction: proline is first activated by ATP to form Pro-AMP and then transferred to the acceptor end of tRNA(Pro). As ProRS can inadvertently accommodate and process non-cognate amino acids such as alanine and cysteine, to avoid such errors it has two additional distinct editing activities against alanine. One activity is designated as 'pretransfer' editing and involves the tRNA(Pro)-independent hydrolysis of activated Ala-AMP. The other activity is designated 'posttransfer' editing and involves deacylation of mischarged Ala-tRNA(Pro). The misacylated Cys-tRNA(Pro) is not edited by ProRS. This chain is Proline--tRNA ligase, found in Streptococcus pneumoniae (strain CGSP14).